Consider the following 338-residue polypeptide: Glycerol-3-phosphate dehydrogenase [NAD(P)+] (338 aa).

NADPH is bound by residues Ser-14, Tyr-15, His-35, and Lys-109. Residues Lys-109, Gly-138, and Thr-140 each coordinate sn-glycerol 3-phosphate. Ala-142 provides a ligand contact to NADPH. Residues Lys-194, Asp-247, Ser-257, Arg-258, and Asn-259 each coordinate sn-glycerol 3-phosphate. The Proton acceptor role is filled by Lys-194. Position 258 (Arg-258) interacts with NADPH. NADPH-binding residues include Val-282 and Glu-284.

Belongs to the NAD-dependent glycerol-3-phosphate dehydrogenase family.

The protein localises to the cytoplasm. The enzyme catalyses sn-glycerol 3-phosphate + NAD(+) = dihydroxyacetone phosphate + NADH + H(+). It catalyses the reaction sn-glycerol 3-phosphate + NADP(+) = dihydroxyacetone phosphate + NADPH + H(+). The protein operates within membrane lipid metabolism; glycerophospholipid metabolism. In terms of biological role, catalyzes the reduction of the glycolytic intermediate dihydroxyacetone phosphate (DHAP) to sn-glycerol 3-phosphate (G3P), the key precursor for phospholipid synthesis. This Shewanella baltica (strain OS195) protein is Glycerol-3-phosphate dehydrogenase [NAD(P)+].